The following is a 209-amino-acid chain: Large ribosomal subunit protein uL3 (209 aa).

The residue at position 150 (Q150) is an N5-methylglutamine.

It belongs to the universal ribosomal protein uL3 family. In terms of assembly, part of the 50S ribosomal subunit. Forms a cluster with proteins L14 and L19. In terms of processing, methylated by PrmB.

Its function is as follows. One of the primary rRNA binding proteins, it binds directly near the 3'-end of the 23S rRNA, where it nucleates assembly of the 50S subunit. The chain is Large ribosomal subunit protein uL3 from Escherichia coli O139:H28 (strain E24377A / ETEC).